The chain runs to 191 residues: 3-hydroxyanthranilate 3,4-dioxygenase 2 (191 aa).

Arg48 lines the O2 pocket. Positions 52, 73, and 111 each coordinate Fe cation. Substrate is bound at residue Glu73. Positions 115 and 125 each coordinate substrate.

Belongs to the 3-HAO family. Requires Fe(2+) as cofactor.

Its subcellular location is the cytoplasm. It carries out the reaction 3-hydroxyanthranilate + O2 = (2Z,4Z)-2-amino-3-carboxymuconate 6-semialdehyde. It participates in cofactor biosynthesis; NAD(+) biosynthesis; quinolinate from L-kynurenine: step 3/3. Its function is as follows. Catalyzes the oxidative ring opening of 3-hydroxyanthranilate to 2-amino-3-carboxymuconate semialdehyde, which spontaneously cyclizes to quinolinate. The chain is 3-hydroxyanthranilate 3,4-dioxygenase 2 (bna1-2) from Aspergillus clavatus (strain ATCC 1007 / CBS 513.65 / DSM 816 / NCTC 3887 / NRRL 1 / QM 1276 / 107).